Reading from the N-terminus, the 158-residue chain is Large ribosomal subunit protein uL16 (158 aa).

The protein belongs to the universal ribosomal protein uL16 family. As to quaternary structure, part of the 50S ribosomal subunit.

Its function is as follows. Binds 23S rRNA and is also seen to make contacts with the A and possibly P site tRNAs. The protein is Large ribosomal subunit protein uL16 of Prochlorococcus marinus (strain MIT 9313).